Reading from the N-terminus, the 244-residue chain is uncharacterized protein (244 aa).

The N-terminal stretch at 1–17 (MVLHVITALLSIGLCYG) is a signal peptide.

Component of the acid-soluble and acid-insoluble organic matrix of prismatic shell layers (at protein level).

Its subcellular location is the secreted. This is an uncharacterized protein from Haliotis asinina (Donkey's ear abalone).